A 114-amino-acid chain; its full sequence is Beta-microseminoprotein (114 aa).

The N-terminal stretch at 1–20 (MNVLLGGFVIFATFVTLCNA) is a signal peptide. 5 disulfides stabilise this stretch: Cys22–Cys70, Cys38–Cys62, Cys57–Cys93, Cys60–Cys69, and Cys84–Cys107.

This sequence belongs to the beta-microseminoprotein family. As to quaternary structure, homodimer; Interacts with PI16.

The protein resides in the secreted. This Papio anubis (Olive baboon) protein is Beta-microseminoprotein (MSMB).